We begin with the raw amino-acid sequence, 453 residues long: Bifunctional protein GlmU (453 aa).

The segment at 1 to 226 is pyrophosphorylase; the sequence is MSFSAVILAA…PIEVEGVNNR (226 aa). UDP-N-acetyl-alpha-D-glucosamine-binding positions include 8-11, lysine 22, glutamine 73, 78-79, 100-102, glycine 137, glutamate 151, asparagine 166, and asparagine 224; these read LAAG, GT, and YGD. Residue aspartate 102 participates in Mg(2+) binding. Asparagine 224 is a binding site for Mg(2+). Positions 227–247 are linker; it reads IQLARLERAYQAMQAERLLEQ. The tract at residues 248–453 is N-acetyltransferase; it reads GVMLRDPSRF…KGWKRPVKQK (206 aa). Residues arginine 330 and lysine 348 each contribute to the UDP-N-acetyl-alpha-D-glucosamine site. The active-site Proton acceptor is histidine 360. Residues tyrosine 363 and asparagine 374 each coordinate UDP-N-acetyl-alpha-D-glucosamine. Acetyl-CoA is bound by residues alanine 377, 383–384, serine 402, alanine 420, and arginine 437; that span reads NY.

The protein in the N-terminal section; belongs to the N-acetylglucosamine-1-phosphate uridyltransferase family. It in the C-terminal section; belongs to the transferase hexapeptide repeat family. Homotrimer. Mg(2+) is required as a cofactor.

It localises to the cytoplasm. The enzyme catalyses alpha-D-glucosamine 1-phosphate + acetyl-CoA = N-acetyl-alpha-D-glucosamine 1-phosphate + CoA + H(+). It catalyses the reaction N-acetyl-alpha-D-glucosamine 1-phosphate + UTP + H(+) = UDP-N-acetyl-alpha-D-glucosamine + diphosphate. It functions in the pathway nucleotide-sugar biosynthesis; UDP-N-acetyl-alpha-D-glucosamine biosynthesis; N-acetyl-alpha-D-glucosamine 1-phosphate from alpha-D-glucosamine 6-phosphate (route II): step 2/2. Its pathway is nucleotide-sugar biosynthesis; UDP-N-acetyl-alpha-D-glucosamine biosynthesis; UDP-N-acetyl-alpha-D-glucosamine from N-acetyl-alpha-D-glucosamine 1-phosphate: step 1/1. The protein operates within bacterial outer membrane biogenesis; LPS lipid A biosynthesis. Catalyzes the last two sequential reactions in the de novo biosynthetic pathway for UDP-N-acetylglucosamine (UDP-GlcNAc). The C-terminal domain catalyzes the transfer of acetyl group from acetyl coenzyme A to glucosamine-1-phosphate (GlcN-1-P) to produce N-acetylglucosamine-1-phosphate (GlcNAc-1-P), which is converted into UDP-GlcNAc by the transfer of uridine 5-monophosphate (from uridine 5-triphosphate), a reaction catalyzed by the N-terminal domain. In Photobacterium profundum (strain SS9), this protein is Bifunctional protein GlmU.